The primary structure comprises 702 residues: Elongation factor G 1 (702 aa).

Residues 8-290 enclose the tr-type G domain; that stretch reads ERYRNIGISA…AVIDFLPSPV (283 aa). GTP is bound by residues 17-24, 88-92, and 142-145; these read AHIDAGKT, DTPGH, and NKMD.

The protein belongs to the TRAFAC class translation factor GTPase superfamily. Classic translation factor GTPase family. EF-G/EF-2 subfamily.

The protein resides in the cytoplasm. In terms of biological role, catalyzes the GTP-dependent ribosomal translocation step during translation elongation. During this step, the ribosome changes from the pre-translocational (PRE) to the post-translocational (POST) state as the newly formed A-site-bound peptidyl-tRNA and P-site-bound deacylated tRNA move to the P and E sites, respectively. Catalyzes the coordinated movement of the two tRNA molecules, the mRNA and conformational changes in the ribosome. This is Elongation factor G 1 from Cupriavidus pinatubonensis (strain JMP 134 / LMG 1197) (Cupriavidus necator (strain JMP 134)).